Reading from the N-terminus, the 373-residue chain is Chaperone protein DnaJ (373 aa).

In terms of domain architecture, J spans 4 to 68 (NYYQILGVSK…QKRAAYDRLG (65 aa)). A CR-type zinc finger spans residues 136–214 (GIEKNINFSS…CHGMGRYHKQ (79 aa)). Zn(2+)-binding residues include Cys149, Cys152, Cys166, Cys169, Cys188, Cys191, Cys202, and Cys205. 4 CXXCXGXG motif repeats span residues 149 to 156 (CNTCHGSG), 166 to 173 (CDACSGVG), 188 to 195 (CHKCQGNG), and 202 to 209 (CKKCHGMG).

Belongs to the DnaJ family. Homodimer. Zn(2+) is required as a cofactor.

Its subcellular location is the cytoplasm. Its function is as follows. Participates actively in the response to hyperosmotic and heat shock by preventing the aggregation of stress-denatured proteins and by disaggregating proteins, also in an autonomous, DnaK-independent fashion. Unfolded proteins bind initially to DnaJ; upon interaction with the DnaJ-bound protein, DnaK hydrolyzes its bound ATP, resulting in the formation of a stable complex. GrpE releases ADP from DnaK; ATP binding to DnaK triggers the release of the substrate protein, thus completing the reaction cycle. Several rounds of ATP-dependent interactions between DnaJ, DnaK and GrpE are required for fully efficient folding. Also involved, together with DnaK and GrpE, in the DNA replication of plasmids through activation of initiation proteins. This Rickettsia rickettsii (strain Sheila Smith) protein is Chaperone protein DnaJ.